We begin with the raw amino-acid sequence, 487 residues long: Histamine H1 receptor (487 aa).

Residues methionine 1–proline 29 are Extracellular-facing. Residues asparagine 5 and asparagine 18 are each glycosylated (N-linked (GlcNAc...) asparagine). Residues leucine 30–tyrosine 50 traverse the membrane as a helical segment. The Cytoplasmic portion of the chain corresponds to alanine 51–leucine 64. The helical transmembrane segment at tyrosine 65–leucine 89 threads the bilayer. Topologically, residues methionine 90–arginine 97 are extracellular. A helical transmembrane segment spans residues proline 98 to isoleucine 123. Cysteines 100 and 180 form a disulfide. Residues aspartate 107 and threonine 112 each coordinate histamine. The tract at residues aspartate 107–threonine 112 is important for agonist binding. The Cytoplasmic segment spans residues aspartate 124–alanine 144. A phosphothreonine mark is found at threonine 140 and threonine 142. The helical transmembrane segment at serine 145–glycine 164 threads the bilayer. Topologically, residues tryptophan 165–threonine 188 are extracellular. The helical transmembrane segment at tryptophan 189 to alanine 211 threads the bilayer. Histamine is bound at residue asparagine 198. The Cytoplasmic segment spans residues lysine 212–glutamine 416. Position 230 is a phosphoserine (serine 230). Over residues lysine 238–lysine 261 the composition is skewed to basic and acidic residues. Residues lysine 238 to glutamate 292 form a disordered region. Threonine 279 carries the post-translational modification Phosphothreonine. Serine 344 and serine 347 each carry phosphoserine. The tract at residues glutamate 345–arginine 377 is disordered. Over residues glycine 353–alanine 370 the composition is skewed to polar residues. A phosphoserine mark is found at serine 380, serine 396, and serine 398. A helical transmembrane segment spans residues leucine 417–phenylalanine 440. Positions phenylalanine 424–tryptophan 428 are important for agonist binding. A histamine-binding site is contributed by tyrosine 431. Residues cysteine 441 and cysteine 444 are joined by a disulfide bond. At cysteine 441–asparagine 446 the chain is on the extracellular side. A helical transmembrane segment spans residues glutamate 447–proline 469. The Cytoplasmic portion of the chain corresponds to leucine 470 to serine 487.

It belongs to the G-protein coupled receptor 1 family. Phosphorylation at sites in the second and third cytoplasmic loops independently contribute to agonist-induced receptor down-regulation.

It localises to the cell membrane. In terms of biological role, G-protein-coupled receptor for histamine, a biogenic amine that functions as an immune modulator and a neurotransmitter. Through the H1 receptor, histamine mediates the contraction of smooth muscles and increases capillary permeability due to contraction of terminal venules. Also mediates neurotransmission in the central nervous system and thereby regulates circadian rhythms, emotional and locomotor activities as well as cognitive functions. In Gorilla gorilla gorilla (Western lowland gorilla), this protein is Histamine H1 receptor.